Here is a 918-residue protein sequence, read N- to C-terminus: Signal transduction histidine-protein kinase BarA (918 aa).

The Cytoplasmic portion of the chain corresponds to 1–10 (MTNYSLRARM). The helical transmembrane segment at 11–31 (MILILAPTVLIGLLLSIFFVV) threads the bilayer. Residues 32-175 (HRYNDLQRQL…LKSVRLQQYK (144 aa)) are Periplasmic-facing. The helical transmembrane segment at 176–196 (EIFISCVMMLFCIGIALIFGW) threads the bilayer. Topologically, residues 197 to 918 (RLMRDVTGPI…VAREASKILG (722 aa)) are cytoplasmic. Residues 200–252 (RDVTGPIRNMVNTVDRIRRGQLDSRVEGFMLGELDMLKNGINSMAMSLAAYHE) form the HAMP domain. The Histidine kinase domain occupies 299-520 (NMSHELRTPL…TFWFHINLDL (222 aa)). His302 bears the Phosphohistidine; by autocatalysis mark. In terms of domain architecture, Response regulatory spans 669 to 785 (TVMAVDDNPA…RLHNLLLRYK (117 aa)). Asp718 carries the post-translational modification 4-aspartylphosphate. Positions 822–918 (KTDLARDMLQ…VAREASKILG (97 aa)) constitute an HPt domain. Residue His861 is modified to Phosphohistidine.

Activation requires a sequential transfer of a phosphate group from a His in the primary transmitter domain, to an Asp in the receiver domain and to a His in the secondary transmitter domain.

It is found in the cell inner membrane. It carries out the reaction ATP + protein L-histidine = ADP + protein N-phospho-L-histidine.. Member of the two-component regulatory system UvrY/BarA involved in the regulation of carbon metabolism via the CsrA/CsrB regulatory system. Phosphorylates UvrY, probably via a four-step phosphorelay. This Shigella flexneri protein is Signal transduction histidine-protein kinase BarA (barA).